A 510-amino-acid chain; its full sequence is GMP synthase [glutamine-hydrolyzing] (510 aa).

Residues 5–195 (LVLVIDFGGQ…LFKICGLKED (191 aa)) enclose the Glutamine amidotransferase type-1 domain. Catalysis depends on Cys82, which acts as the Nucleophile. Residues His169 and Glu171 contribute to the active site. In terms of domain architecture, GMPS ATP-PPase spans 196–385 (WSMSSFAKEK…LGIPHKLVWR (190 aa)). Residue 223–229 (SGGVDSS) coordinates ATP.

As to quaternary structure, homodimer.

It carries out the reaction XMP + L-glutamine + ATP + H2O = GMP + L-glutamate + AMP + diphosphate + 2 H(+). It functions in the pathway purine metabolism; GMP biosynthesis; GMP from XMP (L-Gln route): step 1/1. Functionally, catalyzes the synthesis of GMP from XMP. The protein is GMP synthase [glutamine-hydrolyzing] of Clostridium acetobutylicum (strain ATCC 824 / DSM 792 / JCM 1419 / IAM 19013 / LMG 5710 / NBRC 13948 / NRRL B-527 / VKM B-1787 / 2291 / W).